The chain runs to 407 residues: Steroid 3-ketoacyl-CoA thiolase FadA6 (407 aa).

Residue C110 is the Acyl-thioester intermediate of the active site. Residues Q178, 237-239 (RES), and S262 contribute to the CoA site. Residues H363 and C393 each act as proton acceptor in the active site. G395 is a binding site for substrate.

This sequence belongs to the thiolase-like superfamily. Thiolase family.

It carries out the reaction an acyl-CoA + acetyl-CoA = a 3-oxoacyl-CoA + CoA. It catalyses the reaction 6-methyl-3,7-dioxodecanedioyl-CoA + CoA = 4-methyl-5-oxo-octanedioyl-CoA + acetyl-CoA. It participates in steroid metabolism; cholesterol degradation. In terms of biological role, may be involved in the final steps of cholesterol and steroid degradation. Catalyzes the formation of 4-methyl-5-oxo-octanedioyl-CoA (MOODA-CoA) and acetyl-CoA from 6-methyl-3,7-dioxodecanedioyl-CoA (MeDODA-CoA) and coenzyme A. The protein is Steroid 3-ketoacyl-CoA thiolase FadA6 of Mycobacterium tuberculosis (strain ATCC 25618 / H37Rv).